The primary structure comprises 99 residues: MDLAFELKKALETGKVILGSNETIRLAKTGGAKLIIVARNAPKEIKDDIYYYAKLSDIPVYEFEGTSVELGTLLGKPFVVASLAIVDPGESRILALVKR.

This sequence belongs to the eukaryotic ribosomal protein eL30 family.

In Pyrococcus horikoshii (strain ATCC 700860 / DSM 12428 / JCM 9974 / NBRC 100139 / OT-3), this protein is Large ribosomal subunit protein eL30 (rpl30e).